Consider the following 84-residue polypeptide: Peptide Ctry2346 (84 aa).

A signal peptide spans 1-23 (MKTQTLLFTFSLVLLMVATQTEA). At Leu33 the chain carries Leucine amide. Residues 37–84 (GLLDNLLGKRGLLFGKRALTNQDLFDLAYDPSLSAADMDALEMLLENY) constitute a propeptide that is removed on maturation.

Belongs to the non-disulfide-bridged peptide (NDBP) superfamily. Short antimicrobial peptide (group 4) family. As to expression, expressed by the venom gland.

It is found in the secreted. The protein localises to the target cell membrane. Its function is as follows. Antimicrobial peptide. The protein is Peptide Ctry2346 of Chaerilus tryznai (Scorpion).